We begin with the raw amino-acid sequence, 227 residues long: Protein CAP22 (227 aa).

2 N-linked (GlcNAc...) asparagine glycosylation sites follow: Asn-55 and Asn-72. Residues 143 to 162 (TTIGGGATPAPTSERSRTSD) are disordered.

Its subcellular location is the secreted. It is found in the cell wall. In Colletotrichum gloeosporioides (Anthracnose fungus), this protein is Protein CAP22 (CAP22).